A 149-amino-acid chain; its full sequence is uncharacterized protein (149 aa).

The helical transmembrane segment at 124–144 (IIIIALIIILANYAPSIIGKI) threads the bilayer.

This sequence belongs to the M.jannaschii MJ0023/MJ0349/MJ1072/MJ1074/MJ1107/MJECL16 family.

It localises to the membrane. This is an uncharacterized protein from Methanocaldococcus jannaschii (strain ATCC 43067 / DSM 2661 / JAL-1 / JCM 10045 / NBRC 100440) (Methanococcus jannaschii).